A 200-amino-acid chain; its full sequence is WUSCHEL-related homeobox 9 (200 aa).

Residues Val-10–His-74 constitute a DNA-binding region (homeobox; WUS-type). The segment covering Glu-70–Gly-80 has biased composition (basic residues). The tract at residues Glu-70 to Tyr-118 is disordered. Basic and acidic residues predominate over residues Asp-91–Asp-101.

Belongs to the WUS homeobox family. Specifically expressed in the central cells of the quiescent center (QC) of the root.

The protein localises to the nucleus. Functionally, transcription factor which may be involved in the specification and maintenance of the stem cells (QC cells) in the root apical meristem (RAM). The sequence is that of WUSCHEL-related homeobox 9 (WOX9) from Oryza sativa subsp. japonica (Rice).